We begin with the raw amino-acid sequence, 206 residues long: Holliday junction branch migration complex subunit RuvA (206 aa).

The domain I stretch occupies residues 1-64 (MIGKLKGTLD…EDMLRLYGFQ (64 aa)). The interval 65-144 (SALEREWFRL…AYAGAASGTI (80 aa)) is domain II. Positions 145-154 (GLKQELGEGV) are flexible linker. Residues 154–206 (VAPAPITDAVSALVNLGYSRDTAANAVAAALKTAGEDADASKLIRFGLKELAR) are domain III.

Belongs to the RuvA family. As to quaternary structure, homotetramer. Forms an RuvA(8)-RuvB(12)-Holliday junction (HJ) complex. HJ DNA is sandwiched between 2 RuvA tetramers; dsDNA enters through RuvA and exits via RuvB. An RuvB hexamer assembles on each DNA strand where it exits the tetramer. Each RuvB hexamer is contacted by two RuvA subunits (via domain III) on 2 adjacent RuvB subunits; this complex drives branch migration. In the full resolvosome a probable DNA-RuvA(4)-RuvB(12)-RuvC(2) complex forms which resolves the HJ.

The protein localises to the cytoplasm. Functionally, the RuvA-RuvB-RuvC complex processes Holliday junction (HJ) DNA during genetic recombination and DNA repair, while the RuvA-RuvB complex plays an important role in the rescue of blocked DNA replication forks via replication fork reversal (RFR). RuvA specifically binds to HJ cruciform DNA, conferring on it an open structure. The RuvB hexamer acts as an ATP-dependent pump, pulling dsDNA into and through the RuvAB complex. HJ branch migration allows RuvC to scan DNA until it finds its consensus sequence, where it cleaves and resolves the cruciform DNA. In Mesorhizobium japonicum (strain LMG 29417 / CECT 9101 / MAFF 303099) (Mesorhizobium loti (strain MAFF 303099)), this protein is Holliday junction branch migration complex subunit RuvA.